The following is a 502-amino-acid chain: CBL-interacting serine/threonine-protein kinase 13 (502 aa).

The interval 32–51 (TNKETSTPESPRSPRTPQGS) is disordered. The span at 35-48 (ETSTPESPRSPRTP) shows a compositional bias: low complexity. In terms of domain architecture, Protein kinase spans 57 to 311 (YEIGKLLGHG…IPEIMKHRWF (255 aa)). ATP is bound by residues 63–71 (LGHGSFAKV) and Lys-86. Asp-179 serves as the catalytic Proton acceptor. The tract at residues 197–226 (DFGLSVVSEQLKQEGICQTFCGTPAYLAPE) is activation loop. Ser-201 carries the phosphoserine modification. Thr-215 bears the Phosphothreonine mark. Positions 331–359 (DDDNDDDDSSSLSSGRSSTASEGDAEFDI) are disordered. The span at 340–352 (SSLSSGRSSTASE) shows a compositional bias: low complexity. The NAF domain maps to 366–387 (PRPASLNAFDILSFSDLSGLFE). The PPI stretch occupies residues 390-419 (GQGARFVSAAPMTKIISKLEEIAKEVKFMV).

This sequence belongs to the protein kinase superfamily. CAMK Ser/Thr protein kinase family. SNF1 subfamily. Interacts with CBL2 and CBL3. It depends on Mn(2+) as a cofactor.

It catalyses the reaction L-seryl-[protein] + ATP = O-phospho-L-seryl-[protein] + ADP + H(+). The enzyme catalyses L-threonyl-[protein] + ATP = O-phospho-L-threonyl-[protein] + ADP + H(+). CIPK serine-threonine protein kinases interact with CBL proteins. Binding of a CBL protein to the regulatory NAF domain of CIPK protein lead to the activation of the kinase in a calcium-dependent manner. In Arabidopsis thaliana (Mouse-ear cress), this protein is CBL-interacting serine/threonine-protein kinase 13 (CIPK13).